A 239-amino-acid chain; its full sequence is MLTRKQQELLLFIHGTNEGNPGVPPSFDEMKDALDLASKSGIHRLITALEERGFIRRLPNRARALEVIKLPEAYAGASQVRRGFSPTVIEGSLGKLASPPPAPKPAPPAEAASVAVPVMGRIAAGVPISAIQNNMHDISVPVEMIGSGEHYALEIKGDSMIEAGILDGDTVIIRNGSTASPGDIVVALIDDEEATLKRFRRKGASIALEAANPAYETRIFGPDRVKIQGRLVGLIRRYH.

The segment at residues 27-47 (FDEMKDALDLASKSGIHRLIT) is a DNA-binding region (H-T-H motif). Catalysis depends on for autocatalytic cleavage activity residues Ser-159 and Lys-197.

The protein belongs to the peptidase S24 family. Homodimer.

It catalyses the reaction Hydrolysis of Ala-|-Gly bond in repressor LexA.. Functionally, represses a number of genes involved in the response to DNA damage (SOS response), including recA and lexA. In the presence of single-stranded DNA, RecA interacts with LexA causing an autocatalytic cleavage which disrupts the DNA-binding part of LexA, leading to derepression of the SOS regulon and eventually DNA repair. The sequence is that of LexA repressor from Rhizobium radiobacter (Agrobacterium tumefaciens).